The sequence spans 304 residues: dTDP-4-dehydrorhamnose reductase (304 aa).

NADH-binding positions include 15–17 (GQL), 41–42 (DI), and 63–65 (AYT). NADPH-binding positions include 16–17 (QL), 41–42 (DI), and 63–65 (AYT). DTDP-beta-L-rhamnose is bound at residue 104 to 105 (TD). NADH-binding residues include tyrosine 132 and lysine 136. The NADPH site is built by tyrosine 132 and lysine 136. Tyrosine 132 acts as the Proton donor/acceptor in catalysis. Residue tryptophan 157 participates in dTDP-beta-L-rhamnose binding.

Belongs to the dTDP-4-dehydrorhamnose reductase family. Mg(2+) is required as a cofactor.

It catalyses the reaction dTDP-beta-L-rhamnose + NADP(+) = dTDP-4-dehydro-beta-L-rhamnose + NADPH + H(+). It functions in the pathway carbohydrate biosynthesis; dTDP-L-rhamnose biosynthesis. Its function is as follows. Involved in the biosynthesis of the dTDP-L-rhamnose which is a component of the critical linker, D-N-acetylglucosamine-L-rhamnose disaccharide, which connects the galactan region of arabinogalactan to peptidoglycan via a phosphodiester linkage. Catalyzes the reduction of dTDP-6-deoxy-L-lyxo-4-hexulose to yield dTDP-L-rhamnose. This Mycobacterium tuberculosis (strain CDC 1551 / Oshkosh) protein is dTDP-4-dehydrorhamnose reductase.